Reading from the N-terminus, the 267-residue chain is Thiamine pyrophosphokinase 3 (267 aa).

The protein belongs to the thiamine pyrophosphokinase family.

It is found in the cytoplasm. The protein resides in the cytosol. The enzyme catalyses thiamine + ATP = thiamine diphosphate + AMP + H(+). It functions in the pathway cofactor biosynthesis; thiamine diphosphate biosynthesis; thiamine diphosphate from thiamine: step 1/1. Catalyzes the phosphorylation of thiamine to thiamine pyrophosphate (TPP). TPP is an active cofactor for enzymes involved in glycolysis and energy production. Plant leaves require high levels of TPP for photosynthesis and carbohydrate metabolism. In Oryza sativa subsp. japonica (Rice), this protein is Thiamine pyrophosphokinase 3 (TPK3).